Reading from the N-terminus, the 691-residue chain is Lipase 2 (691 aa).

The signal sequence occupies residues 1-37 (MLRGQEERKYSIRKYSIGVVSVLAATMFVVSSHEAQA). The span at 34–72 (EAQASEKTPTSNAAAQKETLNQPGEQGNAITSHQMQSGK) shows a compositional bias: polar residues. Residues 34–267 (EAQASEKTPT…KPTDKNTDNK (234 aa)) are disordered. Positions 38–296 (SEKTPTSNAA…ADAKKVRPLK (259 aa)) are excised as a propeptide. Over residues 73-82 (QLDDMHKENG) the composition is skewed to basic and acidic residues. Polar residues-rich tracts occupy residues 83–115 (KSGT…NDNQ), 125–172 (SKQS…QPSI), and 186–207 (PTST…AQDA). Basic and acidic residues-rich tracts occupy residues 226–238 (IDAK…RQSE) and 258–267 (KPTDKNTDNK). Residue Ser-413 is the Nucleophile of the active site. Ca(2+) is bound at residue Gly-580. The active-site Charge relay system is the Asp-604. Residue Asp-645 participates in Ca(2+) binding. His-646 serves as the catalytic Charge relay system. Residues Asp-648, Asp-653, and Asp-656 each coordinate Ca(2+).

The protein belongs to the AB hydrolase superfamily. Lipase family.

It is found in the secreted. The enzyme catalyses a triacylglycerol + H2O = a diacylglycerol + a fatty acid + H(+). The sequence is that of Lipase 2 (lip2) from Staphylococcus aureus (strain Mu50 / ATCC 700699).